The primary structure comprises 365 residues: Potassium channel subfamily K member 9 (365 aa).

Over 1-8 (MKKQNVRT) the chain is Cytoplasmic. The chain crosses the membrane as a helical span at residues 9 to 29 (LSLIACTFTYLLVGAAVFDAL). The Extracellular segment spans residues 30 to 88 (ESDHEMREEEKLKAEEIRIRGKYNISTEDYRQLELVILQSEPHRAGVQWKFAGSFYFAI). Residue N53 is glycosylated (N-linked (GlcNAc...) asparagine). Residues 89 to 101 (TVITTIGYGHAAP) constitute an intramembrane region (pore-forming). 4 residues coordinate K(+): T93, I94, G95, and Y96. The selectivity filter 1 stretch occupies residues 93–98 (TIGYGH). The Extracellular portion of the chain corresponds to 102 to 107 (GTDAGK). The helical transmembrane segment at 108 to 128 (AFCMFYAVLGIPLTLVMFQSL) threads the bilayer. At 129-158 (GERMNTFVRYLLKRIKKCCGMRNTEVSMEN) the chain is on the cytoplasmic side. Residues 159-179 (MVTVGFFSCMGTLCIGAAAFS) traverse the membrane as a helical segment. The Extracellular portion of the chain corresponds to 180 to 194 (QCEEWSFFHAYYYCF). The segment at residues 195–207 (ITLTTIGFGDYVA) is an intramembrane region (pore-forming). 4 residues coordinate K(+): T199, I200, G201, and F202. The selectivity filter 2 stretch occupies residues 199–204 (TIGFGD). Residues 208–218 (LQSKGALQRKP) are Extracellular-facing. The helical transmembrane segment at 219-239 (FYVAFSFMYILVGLTVIGAFL) threads the bilayer. The Cytoplasmic portion of the chain corresponds to 240–365 (NLVVLRFLTM…HRLMLRRKSV (126 aa)). Residues 243–248 (VLRFLT) are X-gate.

Belongs to the two pore domain potassium channel (TC 1.A.1.8) family. Homodimer. Heterodimer with KCNK1. Heterodimer with KCNK3. As to expression, highly expressed in the brain.

It is found in the cell membrane. It localises to the mitochondrion inner membrane. The protein resides in the cell projection. The protein localises to the dendrite. It carries out the reaction K(+)(in) = K(+)(out). It catalyses the reaction Na(+)(in) = Na(+)(out). Inhibited by extracellular acidification. Its function is as follows. K(+) channel that conducts voltage-dependent outward rectifying currents upon membrane depolarization. Voltage sensing is coupled to K(+) electrochemical gradient in an 'ion flux gating' mode where outward but not inward ion flow opens the gate. Changes ion selectivity and becomes permeable to Na(+) ions in response to extracellular acidification. Protonation of the pH sensor His-98 stabilizes C-type inactivation conformation likely converting the channel from outward K(+)-conducting, to inward Na(+)-conducting to nonconductive state. Homo- and heterodimerizes to form functional channels with distinct regulatory and gating properties. Allows K(+) currents with fast-gating kinetics important for the repolarization and hyperpolarization phases of action potentials. In granule neurons, hyperpolarizes the resting membrane potential to limit intrinsic neuronal excitability, but once the action potential threshold is reached, supports high-frequency action potential firing and increased neuronal excitability. Homomeric and/or heteromeric KCNK3:KCNK9 channels operate in cerebellar granule cells, whereas heteromeric KCNK1:KCNK9 enables currents in hippocampal dentate gyrus granule neurons. Dispensable for central chemosensory respiration i.e. breathing controlled by brainstem CO2/pH, it rather conducts pH-sensitive currents and controls the firing rate of serotonergic raphe neurons involved in potentiation of the respiratory chemoreflex. In retinal ganglion cells, mediates outward rectifying currents that regulate action potentials in response to acidification of the synaptic cleft. Involved in transmission of image-forming and nonimage-forming visual information in the retina. In adrenal gland, contributes to the maintenance of a hyperpolarized resting membrane potential of aldosterone-producing cells at zona glomerulosa and limits aldosterone release as part of a regulatory mechanism that controls arterial blood pressure and electrolyte homeostasis. This is Potassium channel subfamily K member 9 (KCNK9) from Cavia porcellus (Guinea pig).